Reading from the N-terminus, the 173-residue chain is Crossover junction endodeoxyribonuclease RuvC (173 aa).

Active-site residues include aspartate 8, glutamate 67, and aspartate 139. Residues aspartate 8, glutamate 67, and aspartate 139 each coordinate Mg(2+).

The protein belongs to the RuvC family. In terms of assembly, homodimer which binds Holliday junction (HJ) DNA. The HJ becomes 2-fold symmetrical on binding to RuvC with unstacked arms; it has a different conformation from HJ DNA in complex with RuvA. In the full resolvosome a probable DNA-RuvA(4)-RuvB(12)-RuvC(2) complex forms which resolves the HJ. The cofactor is Mg(2+).

The protein localises to the cytoplasm. It carries out the reaction Endonucleolytic cleavage at a junction such as a reciprocal single-stranded crossover between two homologous DNA duplexes (Holliday junction).. Its function is as follows. The RuvA-RuvB-RuvC complex processes Holliday junction (HJ) DNA during genetic recombination and DNA repair. Endonuclease that resolves HJ intermediates. Cleaves cruciform DNA by making single-stranded nicks across the HJ at symmetrical positions within the homologous arms, yielding a 5'-phosphate and a 3'-hydroxyl group; requires a central core of homology in the junction. The consensus cleavage sequence is 5'-(A/T)TT(C/G)-3'. Cleavage occurs on the 3'-side of the TT dinucleotide at the point of strand exchange. HJ branch migration catalyzed by RuvA-RuvB allows RuvC to scan DNA until it finds its consensus sequence, where it cleaves and resolves the cruciform DNA. In Aeromonas salmonicida (strain A449), this protein is Crossover junction endodeoxyribonuclease RuvC.